Here is a 49-residue protein sequence, read N- to C-terminus: Venom peptide 3 (49 aa).

Residues 1-23 form the signal peptide; it reads MRFTFVLVIAATVAVLGFFGINA. AXPX repeat units lie at residues 23–26 and 31–34; these read AEPM and AEPY. A propeptide spanning residues 24-37 is cleaved from the precursor; it reads EPMPDPHAEPYPDA. Leu48 carries the leucine amide modification.

Expressed by the venom gland.

The protein resides in the secreted. The sequence is that of Venom peptide 3 from Eumenes pomiformis (Potter wasp).